A 201-amino-acid chain; its full sequence is 3-isopropylmalate dehydratase small subunit (201 aa).

It belongs to the LeuD family. LeuD type 1 subfamily. As to quaternary structure, heterodimer of LeuC and LeuD.

It catalyses the reaction (2R,3S)-3-isopropylmalate = (2S)-2-isopropylmalate. It participates in amino-acid biosynthesis; L-leucine biosynthesis; L-leucine from 3-methyl-2-oxobutanoate: step 2/4. In terms of biological role, catalyzes the isomerization between 2-isopropylmalate and 3-isopropylmalate, via the formation of 2-isopropylmaleate. In Mesorhizobium japonicum (strain LMG 29417 / CECT 9101 / MAFF 303099) (Mesorhizobium loti (strain MAFF 303099)), this protein is 3-isopropylmalate dehydratase small subunit.